We begin with the raw amino-acid sequence, 326 residues long: tRNA-dihydrouridine(20/20a) synthase (326 aa).

FMN is bound by residues 11 to 13 (PML) and Gln63. The active-site Proton donor is Cys93. FMN contacts are provided by residues Lys132, His165, 205-207 (NGG), and 227-228 (GR).

This sequence belongs to the Dus family. DusA subfamily. FMN is required as a cofactor.

It catalyses the reaction 5,6-dihydrouridine(20) in tRNA + NADP(+) = uridine(20) in tRNA + NADPH + H(+). It carries out the reaction 5,6-dihydrouridine(20) in tRNA + NAD(+) = uridine(20) in tRNA + NADH + H(+). The catalysed reaction is 5,6-dihydrouridine(20a) in tRNA + NADP(+) = uridine(20a) in tRNA + NADPH + H(+). The enzyme catalyses 5,6-dihydrouridine(20a) in tRNA + NAD(+) = uridine(20a) in tRNA + NADH + H(+). In terms of biological role, catalyzes the synthesis of 5,6-dihydrouridine (D), a modified base found in the D-loop of most tRNAs, via the reduction of the C5-C6 double bond in target uridines. Specifically modifies U20 and U20a in tRNAs. This chain is tRNA-dihydrouridine(20/20a) synthase, found in Vibrio parahaemolyticus serotype O3:K6 (strain RIMD 2210633).